We begin with the raw amino-acid sequence, 147 residues long: Small ribosomal subunit protein uS12 (147 aa).

The protein belongs to the universal ribosomal protein uS12 family. Part of the 30S ribosomal subunit.

In terms of biological role, with S4 and S5 plays an important role in translational accuracy. Located at the interface of the 30S and 50S subunits. This is Small ribosomal subunit protein uS12 from Thermococcus celer.